A 384-amino-acid polypeptide reads, in one-letter code: Sensor protein VanS (384 aa).

The next 2 membrane-spanning stretches (helical) occupy residues 21 to 41 and 76 to 96; these read MYIV…RSMI and IDIF…RVML. The 216-residue stretch at 161–376 folds into the Histidine kinase domain; that stretch reads YLAHDIKTPL…TFRVELPAMP (216 aa). Histidine 164 carries the post-translational modification Phosphohistidine; by autocatalysis. Residues 221–384 form an involved in low-affinity ATP-binding. Exhibits higher affinity for ATP than GTP region; sequence QTITLTKTHI…MPDLVDKRRS (164 aa).

Autophosphorylated.

Its subcellular location is the membrane. It catalyses the reaction ATP + protein L-histidine = ADP + protein N-phospho-L-histidine.. Phosphorylation of VanR inhibited by EDTA. Functionally, member of the two-component regulatory system VanS/VanR. Functions as a sensor protein kinase which is autophosphorylated at a histidine residue in response to environmental stimuli, such as glycopeptide antibiotics. VanS transfers its phosphate group to transcriptional regulatory protein VanR, thereby modulating expression of target genes. Binds directly to, and autophosphorylation activity is enhanced by, the glycopeptides vancomycin and teicoplanin, in vitro. However it has also been reported that autophosphorylation, phosphate transfer to VanR and dephosphorylation of phospho-VanR are all unaffected by the presence of vancomycin, in vitro. In the absence of vancomycin, negatively regulates VanR-mediated activation of vanS, vanH, vanA and vanX, probably as a result of dephosphorylating phospho-VanR. May inhibit promoter-specific DNA binding by VanR. Involved in conferring vancomycin resistance. The chain is Sensor protein VanS from Enterococcus faecium (Streptococcus faecium).